The primary structure comprises 127 residues: Aspartate 1-decarboxylase (127 aa).

The active-site Schiff-base intermediate with substrate; via pyruvic acid is the Ser-25. Ser-25 bears the Pyruvic acid (Ser) mark. Thr-57 contacts substrate. Tyr-58 (proton donor) is an active-site residue. 73 to 75 lines the substrate pocket; the sequence is GAA.

Belongs to the PanD family. As to quaternary structure, heterooctamer of four alpha and four beta subunits. The cofactor is pyruvate. In terms of processing, is synthesized initially as an inactive proenzyme, which is activated by self-cleavage at a specific serine bond to produce a beta-subunit with a hydroxyl group at its C-terminus and an alpha-subunit with a pyruvoyl group at its N-terminus.

It is found in the cytoplasm. It carries out the reaction L-aspartate + H(+) = beta-alanine + CO2. The protein operates within cofactor biosynthesis; (R)-pantothenate biosynthesis; beta-alanine from L-aspartate: step 1/1. Functionally, catalyzes the pyruvoyl-dependent decarboxylation of aspartate to produce beta-alanine. This Neisseria meningitidis serogroup B (strain ATCC BAA-335 / MC58) protein is Aspartate 1-decarboxylase.